The following is a 595-amino-acid chain: Elongation factor 4 (595 aa).

One can recognise a tr-type G domain in the interval 2-184 (KNIRNFSIIA…QIVEKIPAPK (183 aa)). GTP contacts are provided by residues 14 to 19 (DHGKST) and 131 to 134 (NKID).

Belongs to the TRAFAC class translation factor GTPase superfamily. Classic translation factor GTPase family. LepA subfamily.

It is found in the cell inner membrane. The catalysed reaction is GTP + H2O = GDP + phosphate + H(+). In terms of biological role, required for accurate and efficient protein synthesis under certain stress conditions. May act as a fidelity factor of the translation reaction, by catalyzing a one-codon backward translocation of tRNAs on improperly translocated ribosomes. Back-translocation proceeds from a post-translocation (POST) complex to a pre-translocation (PRE) complex, thus giving elongation factor G a second chance to translocate the tRNAs correctly. Binds to ribosomes in a GTP-dependent manner. The chain is Elongation factor 4 from Ruthia magnifica subsp. Calyptogena magnifica.